The following is a 141-amino-acid chain: ATP synthase epsilon chain (141 aa).

This sequence belongs to the ATPase epsilon chain family. In terms of assembly, F-type ATPases have 2 components, CF(1) - the catalytic core - and CF(0) - the membrane proton channel. CF(1) has five subunits: alpha(3), beta(3), gamma(1), delta(1), epsilon(1). CF(0) has three main subunits: a, b and c.

The protein localises to the cell inner membrane. In terms of biological role, produces ATP from ADP in the presence of a proton gradient across the membrane. This chain is ATP synthase epsilon chain, found in Pseudomonas savastanoi pv. phaseolicola (strain 1448A / Race 6) (Pseudomonas syringae pv. phaseolicola (strain 1448A / Race 6)).